Reading from the N-terminus, the 361-residue chain is Phosphoserine aminotransferase (361 aa).

Arg-43 is a binding site for L-glutamate. Pyridoxal 5'-phosphate-binding positions include 77 to 78 (AS), Trp-103, Thr-152, Asp-172, and Gln-195. Residue Lys-196 is modified to N6-(pyridoxal phosphate)lysine. 237–238 (NT) is a pyridoxal 5'-phosphate binding site.

This sequence belongs to the class-V pyridoxal-phosphate-dependent aminotransferase family. SerC subfamily. In terms of assembly, homodimer. Pyridoxal 5'-phosphate serves as cofactor.

The protein localises to the cytoplasm. The enzyme catalyses O-phospho-L-serine + 2-oxoglutarate = 3-phosphooxypyruvate + L-glutamate. It carries out the reaction 4-(phosphooxy)-L-threonine + 2-oxoglutarate = (R)-3-hydroxy-2-oxo-4-phosphooxybutanoate + L-glutamate. The protein operates within amino-acid biosynthesis; L-serine biosynthesis; L-serine from 3-phospho-D-glycerate: step 2/3. It functions in the pathway cofactor biosynthesis; pyridoxine 5'-phosphate biosynthesis; pyridoxine 5'-phosphate from D-erythrose 4-phosphate: step 3/5. Functionally, catalyzes the reversible conversion of 3-phosphohydroxypyruvate to phosphoserine and of 3-hydroxy-2-oxo-4-phosphonooxybutanoate to phosphohydroxythreonine. The sequence is that of Phosphoserine aminotransferase from Desulfosudis oleivorans (strain DSM 6200 / JCM 39069 / Hxd3) (Desulfococcus oleovorans).